We begin with the raw amino-acid sequence, 506 residues long: Histidine ammonia-lyase (506 aa).

Positions 144-146 (ASG) form a cross-link, 5-imidazolinone (Ala-Gly). S145 is modified (2,3-didehydroalanine (Ser)).

Belongs to the PAL/histidase family. Post-translationally, contains an active site 4-methylidene-imidazol-5-one (MIO), which is formed autocatalytically by cyclization and dehydration of residues Ala-Ser-Gly.

It localises to the cytoplasm. It carries out the reaction L-histidine = trans-urocanate + NH4(+). It participates in amino-acid degradation; L-histidine degradation into L-glutamate; N-formimidoyl-L-glutamate from L-histidine: step 1/3. This is Histidine ammonia-lyase from Legionella pneumophila (strain Lens).